The primary structure comprises 500 residues: MLSTSSSRPFKSKFRAAFWPIYNYELGKFIPMSALMFCILFNQNILRILKDSILISEISAEIAGFAKVYCVTPAAALFVIIYAKMINHLTFEKIFYYLTAFFIGFFVLFAFVIYPNIHIFHVHPDYLADWMERYPHFKWYISLIGNWGYIVYYSLAELWPNIFYVLLFWQFANELTTTEEAKRFYTLFSLFGNSSLILVGFLMMNLSSKETIVKHFINISDSKITLVQISTILVTIVAVICCLLIRFISRNVFTNPLFYAKAKSGRSTSERMGIIKSFKYIVKSKYLWLLLICSAAFGFAINLVEAVWKAKIKELYPTVNTYAEFNSLYILWTGVAIMVMTIIGNNVMRMHNWFVAAVISPVIIMVTGVLFFVLIVFDQKILSLFDGAILMSPLALAVSIGGIQNILAKGTKYSIWDTSREMLYIPLDQELKTKGKAAVDVISAKVGKSSSGLVQSIIFTIIPTATFTSISPVLMVVFTFVCLAWIYAVRKIYFEYQKIA.

Helical transmembrane passes span I21–F41, I62–Y82, I94–Y114, Y149–W169, F184–M204, I224–L244, L287–V307, L328–M348, A357–F377, I381–G401, and S469–V489.

Belongs to the ADP/ATP translocase tlc family.

It is found in the cell membrane. Its function is as follows. Provides the rickettsial cell with host ATP in exchange for rickettsial ADP. This is an obligate exchange system. This energy acquiring activity is an important component of rickettsial parasitism. The chain is ADP,ATP carrier protein 5 (tlcE) from Rickettsia bellii (strain RML369-C).